A 370-amino-acid polypeptide reads, in one-letter code: Integrin-linked kinase-associated serine/threonine phosphatase 2C (370 aa).

At M1 the chain carries N-acetylmethionine. The tract at residues 1-69 is disordered; it reads MDLFGDLPEP…SDEEKNGSEE (69 aa). Residue S13 is modified to Phosphoserine. A compositionally biased stretch (low complexity) spans 33–45; sequence SSGDSGSLDTSLS. Over residues 46-69 the composition is skewed to basic and acidic residues; that stretch reads EEVKNEGKGAKRKASDEEKNGSEE. One can recognise a PPM-type phosphatase domain in the interval 86 to 368; it reads KGYVAERKGE…DNVTVMVVRI (283 aa). Positions 130 and 131 each coordinate Mn(2+). N6-acetyllysine is present on K188. Positions 304 and 359 each coordinate Mn(2+).

It belongs to the PP2C family. In terms of assembly, interacts with ILK. Mg(2+) is required as a cofactor. It depends on Mn(2+) as a cofactor.

It is found in the cytoplasm. The enzyme catalyses O-phospho-L-seryl-[protein] + H2O = L-seryl-[protein] + phosphate. The catalysed reaction is O-phospho-L-threonyl-[protein] + H2O = L-threonyl-[protein] + phosphate. Its function is as follows. Protein phosphatase that may play a role in regulation of cell cycle progression via dephosphorylation of its substrates whose appropriate phosphorylation states might be crucial for cell proliferation. Selectively associates with integrin linked kinase (ILK), to modulate cell adhesion and growth factor signaling. Inhibits the ILK-GSK3B signaling axis and may play an important role in inhibiting oncogenic transformation. The polypeptide is Integrin-linked kinase-associated serine/threonine phosphatase 2C (ILKAP) (Bos taurus (Bovine)).